A 254-amino-acid chain; its full sequence is Large ribosomal subunit protein uL15m (254 aa).

The N-terminal 78 residues, 1 to 78 (MFNILSRVCR…GSGQRRGRRI (78 aa)), are a transit peptide targeting the mitochondrion. The tract at residues 44-104 (NYQSKKRVGR…KVGHSTGHLK (61 aa)) is disordered. A compositionally biased stretch (basic residues) spans 64 to 79 (GRGHKGSGQRRGRRIK).

Belongs to the universal ribosomal protein uL15 family. As to quaternary structure, component of the mitochondrial large ribosomal subunit (mt-LSU). Mature yeast 74S mitochondrial ribosomes consist of a small (37S) and a large (54S) subunit. The 37S small subunit contains a 15S ribosomal RNA (15S mt-rRNA) and at least 32 different proteins. The 54S large subunit contains a 21S rRNA (21S mt-rRNA) and at least 45 different proteins.

The protein localises to the mitochondrion. In terms of biological role, component of the mitochondrial ribosome (mitoribosome), a dedicated translation machinery responsible for the synthesis of mitochondrial genome-encoded proteins, including at least some of the essential transmembrane subunits of the mitochondrial respiratory chain. The mitoribosomes are attached to the mitochondrial inner membrane and translation products are cotranslationally integrated into the membrane. This Schizosaccharomyces pombe (strain 972 / ATCC 24843) (Fission yeast) protein is Large ribosomal subunit protein uL15m (mrpl10).